Here is a 723-residue protein sequence, read N- to C-terminus: CSC1-like protein ERD4 (723 aa).

Residues 1–5 (MEFAS) lie on the Cytoplasmic side of the membrane. The chain crosses the membrane as a helical span at residues 6–26 (FLVSLGTSAIIFVVLMFLFTW). Residues 27-90 (LSRRPGNVPV…TAVYFVFQST (64 aa)) lie on the Extracellular side of the membrane. A helical membrane pass occupies residues 91 to 111 (VLGIFALSALLLLPTLLPIAA). Residues 112-148 (TDNNLETSRSATDTTSNGTFSQLDNLSMANITKSSSR) lie on the Cytoplasmic side of the membrane. The helical transmembrane segment at 149–169 (LWAFLGAVYWVSVVTYFMLWK) threads the bilayer. The Extracellular portion of the chain corresponds to 170 to 364 (AYKHVAALRA…IKFFSRIVRQ (195 aa)). The chain crosses the membrane as a helical span at residues 365 to 385 (YVIYFLVAITILFYMIPIAFV). Topologically, residues 386-416 (SAITTLANLQKALPFLKPIVDIAFIRTILES) are cytoplasmic. A helical membrane pass occupies residues 417–437 (YLPQIALIVFLAMLPKFLMFL). At 438–456 (SKSEGIPSQSHAIRATSGK) the chain is on the extracellular side. The helical transmembrane segment at 457-477 (YFYFSVLNVFIGVTLAGSLFE) threads the bilayer. The Cytoplasmic portion of the chain corresponds to 478-508 (NLKALEEKPNSFITLLATSLPKSATFFLTYV). Residues 509-529 (ALKFFVGYGLELSRIIPLIIF) traverse the membrane as a helical segment. The Extracellular portion of the chain corresponds to 530 to 572 (HLKKKYLCKTEAEVKEAWYPGDLSYATRVPSDMLILTITFCYS). A helical membrane pass occupies residues 573–593 (VIAPLILVFGVIYFGLGWLIL). The Cytoplasmic portion of the chain corresponds to 594 to 614 (RNQALKVYVPSYESYGRMWPH). A helical membrane pass occupies residues 615–635 (IHTRILAALFLFQLVMFGYLG). The Extracellular portion of the chain corresponds to 636-637 (VK). Residues 638–658 (IFVWAILLVPLIFISLIFGYV) traverse the membrane as a helical segment. Residues 659–723 (CRQKFYGGFE…YQDYAAISAA (65 aa)) are Cytoplasmic-facing.

It belongs to the CSC1 (TC 1.A.17) family.

It localises to the plastid. The protein resides in the chloroplast membrane. Functionally, acts as an osmosensitive calcium-permeable cation channel. The sequence is that of CSC1-like protein ERD4 (ERD4) from Brassica juncea (Indian mustard).